The sequence spans 207 residues: RNA chaperone ProQ (207 aa).

The segment at 100–156 is disordered; it reads TLAESKAKVQARRKEQAQKARDEEKSKPKTKKAPQQRRANKPQAQKPAKQPVETRAL. The segment covering 111–126 has biased composition (basic and acidic residues); it reads RRKEQAQKARDEEKSK. Positions 127-139 are enriched in basic residues; sequence PKTKKAPQQRRAN.

This sequence belongs to the ProQ family.

The protein localises to the cytoplasm. RNA chaperone with significant RNA binding, RNA strand exchange and RNA duplexing activities. This Vibrio vulnificus (strain CMCP6) protein is RNA chaperone ProQ.